The primary structure comprises 614 residues: MEMETDEGINSLKARIETQHKSHMYMLSSVQSVIPNFVSSLDLSLKVLSSFNHRPFAPTPPLTNFNPPKSSSLQQLPQKPSVKTLKTSLVVTTNPVLEKVTPLSVVLSMVAVCLLSRLPFMEIDSSTLWRKLENDETFTPQDKAAFQELAGDSGGPTLAVEIALRSMADDNGAVELEEFAVSGKSRIMVLNIDRTRLLRQLPETAQHQLQQQQDELSLGDGNMNQNQQQIAKCSMNLEDVDALINKKSFREMQKYETAKELLKIIQTPSIREAAVAAKFKTKGGSQMRPYCDLPTKEDCRRRTGSFIACNKLHFRRIIALHTDINLGDCPFLRTCRHMNTCKYVHYEEDPTPDLPPTMMCAPPPPLKPLKQQRAEYCSEAELGQPQWINCDIRNFRMDILGKFGVIMADPPWDIHMELPYGTMADDEMRTLNVPALQTHGLIFLWVTGRAMELGRECLERWGYKCVEEIIWVKTNQLQRIIRTGRTGHWLNHSKEHCLVGIKGSPEVNRNIDTNVIVSEVRETSRKPDEMYAMMERISPGTRKVELFARMHNTHAGWMSLGNQLSGVRLVDEGLRARFKAAYPDVEVQPASPSRASAMELDSSVAAQTTTSAMM.

The interval 59 to 78 (TPPLTNFNPPKSSSLQQLPQ) is disordered. A compositionally biased stretch (low complexity) spans 67-78 (PPKSSSLQQLPQ). S-adenosyl-L-methionine is bound by residues 391–392 (DI) and D409. Positions 479–492 (RIIRTGRTGHWLNH) are positively charged region required for RNA-binding. Residues K526, 549 to 552 (RMHN), and 562 to 563 (NQ) each bind S-adenosyl-L-methionine. Positions 589–614 (PASPSRASAMELDSSVAAQTTTSAMM) are disordered. A compositionally biased stretch (polar residues) spans 604 to 614 (VAAQTTTSAMM).

This sequence belongs to the MT-A70-like family.

The protein resides in the nucleus. The catalysed reaction is an adenosine in mRNA + S-adenosyl-L-methionine = an N(6)-methyladenosine in mRNA + S-adenosyl-L-homocysteine + H(+). Putative N6-methyltransferase that methylates adenosine residues of some mRNAs. N6-methyladenosine (m6A), which is present at internal sites of some mRNAs, may play a role in the efficiency of mRNA splicing, transport or translation. The protein is Putative N(6)-adenosine-methyltransferase MT-A70-like of Medicago truncatula (Barrel medic).